The chain runs to 377 residues: uncharacterized protein (377 aa).

2 consecutive transmembrane segments (helical) span residues I71 to S91 and A140 to F160.

The protein resides in the membrane. This is an uncharacterized protein from Coxiella burnetii (strain RSA 493 / Nine Mile phase I).